We begin with the raw amino-acid sequence, 423 residues long: NDP-N-acetyl-D-galactosaminuronic acid dehydrogenase (423 aa).

Residue 11–28 participates in NAD(+) binding; that stretch reads TISVVGLGYIGLPTATVL. The active-site Proton donor/acceptor is K218. The active-site Nucleophile is C272.

It belongs to the UDP-glucose/GDP-mannose dehydrogenase family.

In terms of biological role, probably involved in the synthesis of sugar components of EPS I, by converting NDP-N-acetyl-D-galactosamine into NDP-N-acetyl-D-galactosaminuronic acid. The sequence is that of NDP-N-acetyl-D-galactosaminuronic acid dehydrogenase (epsD) from Ralstonia nicotianae (strain ATCC BAA-1114 / GMI1000) (Ralstonia solanacearum).